We begin with the raw amino-acid sequence, 218 residues long: Claudin-5 (218 aa).

Residues 1–7 (MGSAALE) lie on the Cytoplasmic side of the membrane. The chain crosses the membrane as a helical span at residues 8 to 28 (ILGLVLCLVGWVGLILACGLP). At 29–81 (MWQVTAFLDHNIVTAQTTWKGLWMSCVVQSTGHMQCKVYESVLALSAEVQAAR) the chain is on the extracellular side. The helical transmembrane segment at 82 to 102 (ALTVGAVLLALVALFVTLTGA) threads the bilayer. Residues 103-123 (QCTTCVAPGPVKARVALTGGA) lie on the Cytoplasmic side of the membrane. The helical transmembrane segment at 124–144 (LYAVCGLLALVPLCWFANIVV) threads the bilayer. Over 145–160 (REFYDPTVPVSQKYEL) the chain is Extracellular. A helical membrane pass occupies residues 161 to 181 (GAALYIGWAASALLMCGGGLV). Residues 182-218 (CCGAWVCTGRPEFSFPVKYSAPRRPTANGDYDKKNYV) are Cytoplasmic-facing. Residues 217-218 (YV) form an interactions with TJP1, TJP2 and TJP3 region.

This sequence belongs to the claudin family. In terms of assembly, interacts with MPDZ. Directly interacts with TJP1/ZO-1, TJP2/ZO-2 and TJP3/ZO-3. In terms of tissue distribution, widely expressed with highest levels in the lung.

The protein localises to the cell junction. It is found in the tight junction. It localises to the cell membrane. Functionally, plays a major role in tight junction-specific obliteration of the intercellular space, through calcium-independent cell-adhesion activity. This is Claudin-5 (Cldn5) from Mus musculus (Mouse).